The sequence spans 224 residues: Putative ribonuclease Z (224 aa).

2 residues coordinate Zn(2+): D120 and H184.

The protein belongs to the RNase Z family. As to quaternary structure, homodimer. It depends on Zn(2+) as a cofactor.

It catalyses the reaction Endonucleolytic cleavage of RNA, removing extra 3' nucleotides from tRNA precursor, generating 3' termini of tRNAs. A 3'-hydroxy group is left at the tRNA terminus and a 5'-phosphoryl group is left at the trailer molecule.. Zinc phosphodiesterase, which displays some tRNA 3'-processing endonuclease activity. Probably involved in tRNA maturation, by removing a 3'-trailer from precursor tRNA. The polypeptide is Putative ribonuclease Z (rnz) (Mycobacterium tuberculosis (strain CDC 1551 / Oshkosh)).